The chain runs to 141 residues: UPF0102 protein BRADO0179 (141 aa).

Residues 1-24 form a disordered region; that stretch reads MAETDRATDKPAGAPKPAKTASPE. Low complexity predominate over residues 10 to 19; sequence KPAGAPKPAK.

It belongs to the UPF0102 family.

In Bradyrhizobium sp. (strain ORS 278), this protein is UPF0102 protein BRADO0179.